A 22-amino-acid chain; its full sequence is Caerin-3.5 (22 aa).

Lysine amide is present on Lys-22.

Expressed by the skin dorsal glands.

It localises to the secreted. Its function is as follows. Shows significant activity against Gram-positive organisms, but is less effective against Gram-negative organisms. In Ranoidea gracilenta (Dainty green tree frog), this protein is Caerin-3.5.